Here is a 183-residue protein sequence, read N- to C-terminus: Bifunctional protein PyrR (183 aa).

Positions 102–114 (VVLVDDVLYTGRT) match the PRPP-binding motif.

The protein belongs to the purine/pyrimidine phosphoribosyltransferase family. PyrR subfamily. Homodimer and homohexamer; in equilibrium.

It catalyses the reaction UMP + diphosphate = 5-phospho-alpha-D-ribose 1-diphosphate + uracil. Regulates transcriptional attenuation of the pyrimidine nucleotide (pyr) operon by binding in a uridine-dependent manner to specific sites on pyr mRNA. This disrupts an antiterminator hairpin in the RNA and favors formation of a downstream transcription terminator, leading to a reduced expression of downstream genes. Its function is as follows. Also displays a weak uracil phosphoribosyltransferase activity which is not physiologically significant. This is Bifunctional protein PyrR from Listeria monocytogenes serotype 4b (strain CLIP80459).